We begin with the raw amino-acid sequence, 682 residues long: MLPELSAIQAEMQQQGLRRLLVLSGDHNWCHQQAHELQQEFMGDWLWISYRKEKAVLPEKAAGLLGQEYLHGVFDATEGLNAEALAILAGTLKAGSWLVMMVPSWHQWNDQPDRDSIRWNEQSGAIPTPNFIQHIQRQIANDRQVLLWRQNDPFYIPELPQYREWQLPDGQPTAHQHTILARLLRANQGVWVIIAPRGRGKSTLAGMLIQQWQGHCWLTAPAKATTEVVRCYSSEKGQFWAVDNLLKYCRQNSVSDIDWLLIDEAAAIPTPQLFELISYFPRILLTTTVQGYEGTGRGFLHKFCAEIPGCHILNLTEPMRWAESDPLENWLEEALLFDDAVPANHSAKAIGYHVYQQQQWIQQPELLKQFYGILTSAHYKTSPLDLRRLLDAKGMQFVAALGNNTLIGALWMVEEGGLSAELAHEIWAGRRRPRGNLVAQSLAAHSGLPQAAVLKSQRISRVAVQVNRRRQGIAQGMIAFQRERAEEQGMDFISVSFGYTAELWALWQKCGFQLVRIGTHLEASSGCYTAMAIFPLSQQGIALCVQAQQQLARDAYWLESQIGFSLPVDDQADQRLNQNDWQELAGFAFAHRPLSASLPALQRLLLNCGLPLTALRNHLQREMSIEQCVTELRLNGHKALTLLWRQETAQALVSLDEKLAMYWQEWTTVFSEANRLHHPICH.

ATP contacts are provided by residues Gln176, 198-207 (GRGKSTLAGM), and Arg320. Residues 357 to 534 (QQQWIQQPEL…SGCYTAMAIF (178 aa)) enclose the N-acetyltransferase domain. Residues 462–464 (VAV) and Glu502 each bind acetyl-CoA.

This sequence belongs to the RNA cytidine acetyltransferase family. TmcA subfamily.

The protein localises to the cytoplasm. It catalyses the reaction cytidine(34) in elongator tRNA(Met) + acetyl-CoA + ATP + H2O = N(4)-acetylcytidine(34) in elongator tRNA(Met) + ADP + phosphate + CoA + H(+). Its function is as follows. Catalyzes the formation of N(4)-acetylcytidine (ac(4)C) at the wobble position of tRNA(Met), by using acetyl-CoA as an acetyl donor and ATP (or GTP). The chain is tRNA(Met) cytidine acetyltransferase TmcA from Photorhabdus asymbiotica subsp. asymbiotica (strain ATCC 43949 / 3105-77) (Xenorhabdus luminescens (strain 2)).